Here is a 332-residue protein sequence, read N- to C-terminus: Monoterpene synthase 25 (332 aa).

Positions 115, 180, 240, 244, and 248 each coordinate Mg(2+). Residues 115–121 (DDPVVFD) carry the DDXXXXD motif motif. Positions 240–248 (NDILSFYKE) match the NSE/DTE motif motif.

This sequence belongs to the trichodiene synthase family. It depends on Mg(2+) as a cofactor.

Its function is as follows. Terpene cyclase that catalyzes the cyclization of geranyl diphosphate (GPP) to myrcene and linalool. The chain is Monoterpene synthase 25 from Postia placenta (strain ATCC 44394 / Madison 698-R) (Brown rot fungus).